The primary structure comprises 486 residues: Membrane-bound lytic murein transglycosylase F (486 aa).

A signal peptide spans 1–28 (MFAHTLFRKRCAIWLLAIGIFLMLGSCA). A non-LT domain region spans residues 29-267 (EKPSELERIK…RLRERYYGHV (239 aa)). The segment at 268–486 (DVLGYVGAYA…TDLMEELPPL (219 aa)) is LT domain. Residue glutamate 314 is part of the active site.

The protein in the N-terminal section; belongs to the bacterial solute-binding protein 3 family. It in the C-terminal section; belongs to the transglycosylase Slt family.

The protein resides in the cell outer membrane. The enzyme catalyses Exolytic cleavage of the (1-&gt;4)-beta-glycosidic linkage between N-acetylmuramic acid (MurNAc) and N-acetylglucosamine (GlcNAc) residues in peptidoglycan, from either the reducing or the non-reducing ends of the peptidoglycan chains, with concomitant formation of a 1,6-anhydrobond in the MurNAc residue.. Murein-degrading enzyme that degrades murein glycan strands and insoluble, high-molecular weight murein sacculi, with the concomitant formation of a 1,6-anhydromuramoyl product. Lytic transglycosylases (LTs) play an integral role in the metabolism of the peptidoglycan (PG) sacculus. Their lytic action creates space within the PG sacculus to allow for its expansion as well as for the insertion of various structures such as secretion systems and flagella. This Stutzerimonas stutzeri (strain A1501) (Pseudomonas stutzeri) protein is Membrane-bound lytic murein transglycosylase F.